Reading from the N-terminus, the 135-residue chain is Large ribosomal subunit protein mL54 (135 aa).

The protein belongs to the mitochondrion-specific ribosomal protein mL54 family. In terms of assembly, component of the mitochondrial ribosome large subunit (39S) which comprises a 16S rRNA and about 50 distinct proteins.

The protein resides in the mitochondrion. This chain is Large ribosomal subunit protein mL54 (mrpl54), found in Danio rerio (Zebrafish).